The primary structure comprises 1186 residues: Sericin 1 (1186 aa).

Residues 1-21 (MRFVLCCTLIALAALSVKAFG) form the signal peptide. Polar residues-rich tracts occupy residues 39 to 48 (AASSESSYLN) and 104 to 115 (NGGSASAGQSRD). Disordered stretches follow at residues 39–119 (AASS…SSLR), 131–494 (AVAA…EDSS), and 518–1157 (GGAT…VNRL). Residues 145–155 (AQQNAQANWNA) show a composition bias toward low complexity. The segment covering 180–198 (SDKDITAASKDDSRADSSR) has biased composition (basic and acidic residues). Low complexity predominate over residues 211-224 (SESAGLSDRSASSS). The segment covering 256-275 (YYNSSPDGSYNAGTRDSSIS) has biased composition (polar residues). Residues 286 to 299 (ADKDQIRAANDRSS) show a composition bias toward basic and acidic residues. The span at 300 to 312 (SKQLKQSSAQISS) shows a compositional bias: low complexity. Over residues 321–334 (SKDRQYSNDKRSKS) the composition is skewed to basic and acidic residues. Polar residues-rich tracts occupy residues 356 to 380 (RQSNTNYADQNSVRSDSAASDQTSK), 393 to 409 (AHSSGSRGSQNQKSSSY), and 416 to 445 (FSSSTNTEKSKFSSSNSVVETSDGASASRE). 6 stretches are compositionally biased toward low complexity: residues 465–491 (ASQSSSSRSSQESASYSSSSSSSTLSE), 518–537 (GGATKSGASSSTQATTVSGA), 553–698 (SSSS…YGYS), 705–1004 (RVSS…YSSS), 1015–1075 (SSSN…ASSE), and 1097–1145 (SSTT…TSSS). Tandem repeats lie at residues 593 to 630 (SSTGSTSNTDSSSKSAGSRTSGGSSTYGYSSSHRGGSV), 631 to 668 (SSTGSSSNTDSSTKNAGSSTSGGSSTYGYSSSHRGGSV), 669 to 706 (SSTGSSSNTDSSTKSAGSSTSGGSSTYGYSSRHRGGRV), 707 to 744 (SSTGSSSTTDASSNSVGSSTSGGSSTYGYSSNSRDGSV), 745 to 782 (SSTGSSSNTDSNSNSAGSSTSGGSSTYGYSSNSRDGSV), 783 to 820 (SSTGSSSNTDSNSNSAGSSTSGGSSTYGYSSNSRDGSV), 821 to 858 (SSTGSSSNTDASTDLTGSSTSGGSSTYGYSSDSRDGSV), 859 to 896 (SSTGSSSNTDASTDLAGSSTSGGSSTYGYSSDCGDGSV), 897 to 934 (SSTGSSSNTDASTDLAGSSTSGGSSTYGYSSDSRDGSV), 935 to 972 (SSTGSSSNTDASTDLAGSSTSGGSSTYGYSSNSRDGSV), and 973 to 1010 (SSTGSSSNTDASTDLTGSSTSGGSSTYGYSSSNRDGSV). Basic residues predominate over residues 1148–1157 (RSHHSGVNRL).

In terms of tissue distribution, produced exclusively in the middle (MSG) section of silk glands.

It is found in the secreted. In terms of biological role, provides the silk fibroin thread with a sticky coating. Acts as a cement by sticking silk threads together. The protein is Sericin 1 (ser1) of Bombyx mori (Silk moth).